The following is a 296-amino-acid chain: Protoheme IX farnesyltransferase (296 aa).

A run of 9 helical transmembrane segments spans residues 27-47 (IMYL…GTIH), 48-68 (PLIG…AGAL), 98-118 (ALEC…LTVN), 120-140 (VSAI…TMVL), 148-168 (IVIG…SVTG), 175-195 (LLLF…LSLL), 219-239 (HIMG…LYVA), 242-262 (VLYE…AYCL), and 274-294 (CMGL…AIAL).

It belongs to the UbiA prenyltransferase family. Protoheme IX farnesyltransferase subfamily.

It localises to the cell inner membrane. It catalyses the reaction heme b + (2E,6E)-farnesyl diphosphate + H2O = Fe(II)-heme o + diphosphate. Its pathway is porphyrin-containing compound metabolism; heme O biosynthesis; heme O from protoheme: step 1/1. Functionally, converts heme B (protoheme IX) to heme O by substitution of the vinyl group on carbon 2 of heme B porphyrin ring with a hydroxyethyl farnesyl side group. The chain is Protoheme IX farnesyltransferase from Anaplasma phagocytophilum (strain HZ).